We begin with the raw amino-acid sequence, 471 residues long: dTDP-4-dehydro-6-deoxy-alpha-D-glucopyranose 2,3-dehydratase (471 aa).

Residues Trp-67, 155 to 159 (TRSNY), Ser-193, Asn-238, Trp-288, Arg-351, 367 to 369 (QCT), 372 to 373 (NY), and 405 to 408 (EGGR) contribute to the dTDP-4-dehydro-6-deoxy-alpha-D-glucose site.

Belongs to the hexose 2,3-dehydratase family. In terms of assembly, homodimer.

It carries out the reaction dTDP-4-dehydro-6-deoxy-alpha-D-glucose = dTDP-3,4-didehydro-2,6-dideoxy-alpha-D-glucose + H2O. It participates in antibiotic biosynthesis. Involved in the biosynthesis of the 2,3,6-trideoxysugar L-epivancosamine, the terminal sugar added to the aglycone scaffold of chloroeremomycin, a member of the glycopeptide antibiotics vancomycin family. Catalyzes the removal of the hydroxyl group at position C-2 of the hexose ring of dTDP-4-dehydro-6-deoxy-alpha-D-glucopyranose, and the oxidation of the hydroxyl group at position C-3 to form a carbonyl functionality. The product of the reaction, dTDP-2,6-dideoxy-D-glycero-hex-2-enos-4-ulose, is a highly unstable diketosugar, which spontaneously forms dTDP-3,4-didehydro-2,6-dideoxy-alpha-D-glucose. This Amycolatopsis orientalis (Nocardia orientalis) protein is dTDP-4-dehydro-6-deoxy-alpha-D-glucopyranose 2,3-dehydratase.